The chain runs to 280 residues: Feruloyl esterase 1 (280 aa).

The N-terminal stretch at 1 to 20 (MKAFATRALAFSVAAGQALA) is a signal peptide. 3 disulfide bridges follow: C49–C278, C111–C114, and C247–C254. N99 is a glycosylation site (N-linked (GlcNAc...) asparagine). S153 serves as the catalytic Nucleophile. Catalysis depends on D214, which acts as the Charge relay system. H267 acts as the Charge relay system in catalysis.

Belongs to the AB hydrolase superfamily. FaeA family. Glycosylated.

The protein localises to the secreted. The enzyme catalyses feruloyl-polysaccharide + H2O = ferulate + polysaccharide.. Its activity is regulated as follows. Metal or basic ions Mn(2+), Ni(+), Mg(2+), and NH(4)(+) decrease the activity by 4.4% to 14.1%. The enzymatic activity is inhibited by Zn(2+) at a low concentration (1 mM) but not a high concentration (5 mM). Loses about a quarter of activity by the addition of 1 mM of Cu(2+) or Fe(3+) and activity is completely suppressed when the concentration was up to 5 mM. Low concentrations (0.25 and 0.5 M) of NaCl improve the activity by 5.6 % or 8.3%, respectively. Its function is as follows. Involved in degradation of plant cell walls. Hydrolyzes the feruloyl-arabinose ester bond in arabinoxylans, and the feruloyl-galactose ester bond in pectin. In Penicillium parvum (Eupenicillium parvum), this protein is Feruloyl esterase 1.